Consider the following 145-residue polypeptide: RING-H2 finger protein ATL18 (145 aa).

Residues 1–29 form the signal peptide; the sequence is MISMLFPRSPLCTAAIVFYTCVCIPLGRL. Residues 62–105 form an RING-type; atypical zinc finger; sequence CPICLVEFEAEDAVTHLPRCAHLFHINCIEPWLLRGHLTCPLCR. A helical transmembrane segment spans residues 125–145; it reads STLYLSIFFFFCIFLHLLGYL.

The protein belongs to the RING-type zinc finger family. ATL subfamily.

It localises to the membrane. The catalysed reaction is S-ubiquitinyl-[E2 ubiquitin-conjugating enzyme]-L-cysteine + [acceptor protein]-L-lysine = [E2 ubiquitin-conjugating enzyme]-L-cysteine + N(6)-ubiquitinyl-[acceptor protein]-L-lysine.. It participates in protein modification; protein ubiquitination. The sequence is that of RING-H2 finger protein ATL18 (ATL18) from Arabidopsis thaliana (Mouse-ear cress).